A 353-amino-acid polypeptide reads, in one-letter code: Photosystem II protein D1 (353 aa).

Thr2 carries the post-translational modification N-acetylthreonine. Phosphothreonine is present on Thr2. 3 helical membrane passes run 29–46, 118–133, and 142–156; these read YIGW…TATS, HFLL…EWEL, and WIAV…AATA. His118 serves as a coordination point for chlorophyll a. A pheophytin a-binding site is contributed by Tyr126. The [CaMn4O5] cluster site is built by Asp170 and Glu189. A helical transmembrane segment spans residues 197-218; the sequence is FHMLGVAGVFGGSLFSAMHGSL. His198 lines the chlorophyll a pocket. Residues His215 and 264-265 each bind a quinone; that span reads SF. His215 contacts Fe cation. His272 contributes to the Fe cation binding site. The helical transmembrane segment at 274–288 threads the bilayer; the sequence is FLAAWPVVGIWFTAL. [CaMn4O5] cluster is bound by residues His332, Glu333, Asp342, and Ala344. A propeptide spanning residues 345 to 353 is cleaved from the precursor; sequence AMEAPSVNG.

This sequence belongs to the reaction center PufL/M/PsbA/D family. In terms of assembly, PSII is composed of 1 copy each of membrane proteins PsbA, PsbB, PsbC, PsbD, PsbE, PsbF, PsbH, PsbI, PsbJ, PsbK, PsbL, PsbM, PsbT, PsbX, PsbY, PsbZ, Psb30/Ycf12, at least 3 peripheral proteins of the oxygen-evolving complex and a large number of cofactors. It forms dimeric complexes. The D1/D2 heterodimer binds P680, chlorophylls that are the primary electron donor of PSII, and subsequent electron acceptors. It shares a non-heme iron and each subunit binds pheophytin, quinone, additional chlorophylls, carotenoids and lipids. D1 provides most of the ligands for the Mn4-Ca-O5 cluster of the oxygen-evolving complex (OEC). There is also a Cl(-1) ion associated with D1 and D2, which is required for oxygen evolution. The PSII complex binds additional chlorophylls, carotenoids and specific lipids. is required as a cofactor. Tyr-161 forms a radical intermediate that is referred to as redox-active TyrZ, YZ or Y-Z. In terms of processing, C-terminally processed by CTPA; processing is essential to allow assembly of the oxygen-evolving complex and thus photosynthetic growth.

Its subcellular location is the plastid. It is found in the chloroplast thylakoid membrane. The enzyme catalyses 2 a plastoquinone + 4 hnu + 2 H2O = 2 a plastoquinol + O2. In terms of biological role, photosystem II (PSII) is a light-driven water:plastoquinone oxidoreductase that uses light energy to abstract electrons from H(2)O, generating O(2) and a proton gradient subsequently used for ATP formation. It consists of a core antenna complex that captures photons, and an electron transfer chain that converts photonic excitation into a charge separation. The D1/D2 (PsbA/PsbD) reaction center heterodimer binds P680, the primary electron donor of PSII as well as several subsequent electron acceptors. The polypeptide is Photosystem II protein D1 (Phaseolus vulgaris (Kidney bean)).